The primary structure comprises 104 residues: Pterin-4-alpha-carbinolamine dehydratase (104 aa).

N-acetylalanine is present on A2. Substrate is bound by residues 61-63 (DHH) and 78-81 (STHD).

The protein belongs to the pterin-4-alpha-carbinolamine dehydratase family. As to quaternary structure, homotetramer and homodimer.

It is found in the cytoplasm. The protein localises to the nucleus. The enzyme catalyses (4aS,6R)-4a-hydroxy-L-erythro-5,6,7,8-tetrahydrobiopterin = (6R)-L-erythro-6,7-dihydrobiopterin + H2O. Involved in tetrahydrobiopterin biosynthesis. Seems to both prevent the formation of 7-pterins and accelerate the formation of quinonoid-BH2. Coactivator for HNF1A-dependent transcription. Regulates the dimerization of homeodomain protein HNF1A and enhances its transcriptional activity. Also acts as a coactivator for HNF1B-dependent transcription. In Xenopus laevis (African clawed frog), this protein is Pterin-4-alpha-carbinolamine dehydratase (pcbd).